We begin with the raw amino-acid sequence, 140 residues long: Profilin-1 (140 aa).

Ala2 carries the N-acetylalanine modification. Position 28 is a phosphoserine (Ser28). Lys54 participates in a covalent cross-link: Glycyl lysine isopeptide (Lys-Gly) (interchain with G-Cter in SUMO2); alternate. Residue Lys54 forms a Glycyl lysine isopeptide (Lys-Gly) (interchain with G-Cter in ubiquitin); alternate linkage. Ser57 and Ser85 each carry phosphoserine. 2 positions are modified to N6-acetyllysine: Lys105 and Lys108. Residue Tyr129 is modified to Phosphotyrosine. Ser138 is subject to Phosphoserine; by ROCK1.

The protein belongs to the profilin family. Found in a complex with XPO6, Ran, ACTB and PFN1. Interacts with ACTB. Interacts with VASP. Interacts with HTT. Interacts with SH3BGRL. Occurs in many kinds of cells as a complex with monomeric actin in a 1:1 ratio. Interacts with ACTMAP. Phosphorylation at Ser-138 reduces its affinity for G-actin and blocks its interaction with HTT, reducing its ability to inhibit androgen receptor (AR) and HTT aggregation. Expressed in epididymis (at protein level).

The protein resides in the cytoplasm. The protein localises to the cytoskeleton. Its function is as follows. Binds to actin and affects the structure of the cytoskeleton. At high concentrations, profilin prevents the polymerization of actin, whereas it enhances it at low concentrations. By binding to PIP2, it inhibits the formation of IP3 and DG. Inhibits androgen receptor (AR) and HTT aggregation and binding of G-actin is essential for its inhibition of AR. This Homo sapiens (Human) protein is Profilin-1 (PFN1).